The chain runs to 318 residues: Thymidylate synthase (318 aa).

DUMP contacts are provided by residues Arg-25 and 180 to 181; that span reads RR. Catalysis depends on Cys-200, which acts as the Nucleophile. DUMP is bound by residues 220–223, Asn-231, and 261–263; these read RSGD and HIY. Asp-223 contributes to the (6R)-5,10-methylene-5,6,7,8-tetrahydrofolate binding site. Residue Ala-317 coordinates (6R)-5,10-methylene-5,6,7,8-tetrahydrofolate.

Belongs to the thymidylate synthase family. Bacterial-type ThyA subfamily. Homodimer.

The protein localises to the cytoplasm. It catalyses the reaction dUMP + (6R)-5,10-methylene-5,6,7,8-tetrahydrofolate = 7,8-dihydrofolate + dTMP. Its pathway is pyrimidine metabolism; dTTP biosynthesis. In terms of biological role, catalyzes the reductive methylation of 2'-deoxyuridine-5'-monophosphate (dUMP) to 2'-deoxythymidine-5'-monophosphate (dTMP) while utilizing 5,10-methylenetetrahydrofolate (mTHF) as the methyl donor and reductant in the reaction, yielding dihydrofolate (DHF) as a by-product. This enzymatic reaction provides an intracellular de novo source of dTMP, an essential precursor for DNA biosynthesis. In Lactobacillus helveticus (strain DPC 4571), this protein is Thymidylate synthase.